The following is a 258-amino-acid chain: MAPITEEAVSGLKDIIGKLEARVEELESRLSNGFKPKSVAEHMRMVLMGPPGAGKGTQAPALKDKYCVCHLATGDMLRSQVAKKTELGKEAKKIMDQGGLVSDEIMVNMIKSELDNNSECKNGFILDGFPRTVAQAERLDDMLAARQQKLQHAVELQIDDALLVARITGRLVHPASGRSYHKVFNPPKQEMKDDITGEPLIQRSDDNAETLKKRLGTYHAQTAPVVDYYKKTGIWRGIDASQEPGQVWKSLLGVFQQN.

52 to 57 (GAGKGT) is an ATP binding site. Positions 72–101 (ATGDMLRSQVAKKTELGKEAKKIMDQGGLV) are NMP. Residues T73, R78, 99–101 (GLV), 128–131 (GFPR), and Q135 each bind AMP. Positions 169 to 206 (GRLVHPASGRSYHKVFNPPKQEMKDDITGEPLIQRSDD) are LID. ATP is bound by residues R170 and 179–180 (SY). 2 residues coordinate AMP: R203 and R214. Q242 provides a ligand contact to ATP.

It belongs to the adenylate kinase family. AK2 subfamily. Monomer.

It is found in the cytoplasm. The protein resides in the cytosol. It localises to the mitochondrion intermembrane space. It catalyses the reaction AMP + ATP = 2 ADP. In terms of biological role, catalyzes the reversible transfer of the terminal phosphate group between ATP and AMP. Plays an important role in cellular energy homeostasis and in adenine nucleotide metabolism. Adenylate kinase activity is critical for regulation of the phosphate utilization and the AMP de novo biosynthesis pathways. The protein is Adenylate kinase (adk1) of Aspergillus oryzae (strain ATCC 42149 / RIB 40) (Yellow koji mold).